Consider the following 109-residue polypeptide: uncharacterized protein (109 aa).

Residues 27–89 (KEEAHQFRDK…LKRIDELIAV (63 aa)) are a coiled coil.

This is an uncharacterized protein from Streptococcus pneumoniae.